A 325-amino-acid polypeptide reads, in one-letter code: GMP reductase (325 aa).

Cys-173 serves as the catalytic Thioimidate intermediate. 202-225 (IIADGGIRSHGDIAKSIRFGATMV) contacts NADP(+).

It belongs to the IMPDH/GMPR family. GuaC type 2 subfamily.

It catalyses the reaction IMP + NH4(+) + NADP(+) = GMP + NADPH + 2 H(+). Catalyzes the irreversible NADPH-dependent deamination of GMP to IMP. It functions in the conversion of nucleobase, nucleoside and nucleotide derivatives of G to A nucleotides, and in maintaining the intracellular balance of A and G nucleotides. This is GMP reductase from Paracidovorax citrulli (strain AAC00-1) (Acidovorax citrulli).